Consider the following 444-residue polypeptide: Na(+)-translocating NADH-quinone reductase subunit A (444 aa).

It belongs to the NqrA family. In terms of assembly, composed of six subunits; NqrA, NqrB, NqrC, NqrD, NqrE and NqrF.

The enzyme catalyses a ubiquinone + n Na(+)(in) + NADH + H(+) = a ubiquinol + n Na(+)(out) + NAD(+). NQR complex catalyzes the reduction of ubiquinone-1 to ubiquinol by two successive reactions, coupled with the transport of Na(+) ions from the cytoplasm to the periplasm. NqrA to NqrE are probably involved in the second step, the conversion of ubisemiquinone to ubiquinol. This Shewanella frigidimarina (strain NCIMB 400) protein is Na(+)-translocating NADH-quinone reductase subunit A.